The following is a 667-amino-acid chain: Leucine-rich repeat-containing protein 43 (667 aa).

The segment covering 1–11 has biased composition (polar residues); sequence METSESSTSDY. Residues 1-24 form a disordered region; sequence METSESSTSDYRQTEGEGEGVPGT. LRR repeat units lie at residues 148–169, 170–191, 194–213, and 221–242; these read KLEE…NLPP, TLKV…CSAP, RLQH…ESLY, and QLVS…ILGL. An LRRCT domain is found at 256–294; it reads NPLSLVPYYRGFTIDSLAHLCVLDDITVSPNEKHQFRGL. 3 disordered regions span residues 374–407, 533–570, and 616–640; these read FSGT…TEEM, ESPL…RQDP, and SKKV…SGYQ. Residues 377-386 are compositionally biased toward acidic residues; it reads TDEEDQQEDP. Positions 390 to 399 are enriched in basic residues; the sequence is RHRHRGRQRF. Basic and acidic residues predominate over residues 540–553; the sequence is KGKDNNKKKEPAKD. Over residues 617-627 the composition is skewed to basic residues; that stretch reads KKVKKSLKKDR.

The protein is Leucine-rich repeat-containing protein 43 (Lrrc43) of Mus musculus (Mouse).